Consider the following 344-residue polypeptide: Probable glucan endo-1,3-beta-glucosidase At4g16260 (344 aa).

Positions 1-21 (MTTLFLLIALFITTILNPTSG) are cleaved as a signal peptide. The Proton donor role is filled by Glu116. Residue Glu257 is the Nucleophile of the active site.

The protein belongs to the glycosyl hydrolase 17 family. In terms of assembly, (Microbial infection) Interacts with the 30C02 effector protein (AC G3GD54) of the beet cyst nematode Heterodera schachtii. Interaction with the 30C02 effector protein may potentially suppress beta-1,3-glucanase activity and plant defense.

Its subcellular location is the secreted. It carries out the reaction Hydrolysis of (1-&gt;3)-beta-D-glucosidic linkages in (1-&gt;3)-beta-D-glucans.. May be involved in plant defense against cyst nematode pathogens. The polypeptide is Probable glucan endo-1,3-beta-glucosidase At4g16260 (Arabidopsis thaliana (Mouse-ear cress)).